A 277-amino-acid chain; its full sequence is Small ribosomal subunit protein uS2 (277 aa).

The disordered stretch occupies residues 1-78 (MSENDEGTDA…PADEEPVLDE (78 aa)).

This sequence belongs to the universal ribosomal protein uS2 family.

This Natronomonas pharaonis (strain ATCC 35678 / DSM 2160 / CIP 103997 / JCM 8858 / NBRC 14720 / NCIMB 2260 / Gabara) (Halobacterium pharaonis) protein is Small ribosomal subunit protein uS2.